Consider the following 206-residue polypeptide: Nucleoside triphosphate pyrophosphatase (206 aa).

Asp78 (proton acceptor) is an active-site residue.

It belongs to the Maf family. Requires a divalent metal cation as cofactor.

It localises to the cytoplasm. The enzyme catalyses a ribonucleoside 5'-triphosphate + H2O = a ribonucleoside 5'-phosphate + diphosphate + H(+). The catalysed reaction is a 2'-deoxyribonucleoside 5'-triphosphate + H2O = a 2'-deoxyribonucleoside 5'-phosphate + diphosphate + H(+). In terms of biological role, nucleoside triphosphate pyrophosphatase. May have a dual role in cell division arrest and in preventing the incorporation of modified nucleotides into cellular nucleic acids. The sequence is that of Nucleoside triphosphate pyrophosphatase from Prochlorococcus marinus (strain MIT 9312).